Here is a 424-residue protein sequence, read N- to C-terminus: GTPase Obg (424 aa).

Residues 1-158 form the Obg domain; the sequence is MFYDQAKIYV…RNLLLELKLL (158 aa). Positions 159 to 329 constitute an OBG-type G domain; it reads ADVGLVGFPN…LVYAAAKALP (171 aa). Residues 165–172, 190–194, 212–215, 282–285, and 310–312 contribute to the GTP site; these read GFPNVGKS, FTTLV, DIPG, NKMD, and SAA. 2 residues coordinate Mg(2+): Ser172 and Thr192. An OCT domain is found at 347 to 424; that stretch reads TQASAPHRFE…IAGIEFEWEE (78 aa).

The protein belongs to the TRAFAC class OBG-HflX-like GTPase superfamily. OBG GTPase family. In terms of assembly, monomer. The cofactor is Mg(2+).

The protein resides in the cytoplasm. Its function is as follows. An essential GTPase which binds GTP, GDP and possibly (p)ppGpp with moderate affinity, with high nucleotide exchange rates and a fairly low GTP hydrolysis rate. Plays a role in control of the cell cycle, stress response, ribosome biogenesis and in those bacteria that undergo differentiation, in morphogenesis control. The polypeptide is GTPase Obg (Desulfitobacterium hafniense (strain DSM 10664 / DCB-2)).